A 134-amino-acid polypeptide reads, in one-letter code: Agouti-related protein (134 aa).

An N-terminal signal peptide occupies residues 1–20 (MLTAVLLSCALLLAMPPLQG). Positions 21–84 (AQMGPAPLEG…VLDPEGRKPR (64 aa)) are excised as a propeptide. Disulfide bonds link Cys-89-Cys-104, Cys-96-Cys-110, Cys-103-Cys-121, Cys-107-Cys-131, and Cys-112-Cys-119. An Agouti domain is found at 89 to 131 (CVRLHESCLGHQVPCCDPCATCYCRFFNAFCYCRKLGTTTNPC). The interaction with melanocortin receptors stretch occupies residues 113-115 (RFF).

As to quaternary structure, interacts with melanocortin receptors MC3R, MC4R and MC5R.

It is found in the secreted. Its subcellular location is the golgi apparatus lumen. Functionally, plays a role in weight homeostasis. Involved in the control of feeding behavior through the central melanocortin system. Acts as alpha melanocyte-stimulating hormone antagonist by inhibiting cAMP production mediated by stimulation of melanocortin receptors within the hypothalamus and adrenal gland. Has very low activity with MC5R. Is an inverse agonist for MC3R and MC4R being able to suppress their constitutive activity. It promotes MC3R and MC4R endocytosis in an arrestin-dependent manner. The protein is Agouti-related protein (AGRP) of Bos taurus (Bovine).